The primary structure comprises 855 residues: Envelope glycoprotein gp160 (855 aa).

Residues 1-31 form the signal peptide; the sequence is MTARGTRKNYQRLWRWGTMLLGMLMICSAAE. The Extracellular segment spans residues 32–683; it reads NLWVTVYYGV…ITNWLWYIRI (652 aa). A disulfide bridge connects residues Cys53 and Cys73. N-linked (GlcNAc...) asparagine; by host glycans are attached at residues Asn87, Asn134, Asn142, Asn145, Asn161, Asn165, Asn192, Asn202, Asn239, Asn246, Asn267, Asn281, Asn294, Asn300, Asn306, Asn336, and Asn359. 5 cysteine pairs are disulfide-bonded: Cys118/Cys210, Cys125/Cys201, Cys130/Cys162, Cys223/Cys252, and Cys233/Cys244. Residues 130 to 161 form a V1 region; it reads CTDVNTTSSSLRNATNTTSSSWETMEKGELKN. Positions 162 to 201 are V2; it reads CSFNTTTSIRDKMQEQYALFYKLDVLPIDKNDTKFRLIHC. Residues 301–334 are V3; the sequence is CTRPNNNTRNRISIGPGRAFHTTKQIIGDIRQAH. Cys301 and Cys335 are joined by a disulfide. The tract at residues 367-377 is CD4-binding loop; sequence SSGGDPEIVMH. Cystine bridges form between Cys381–Cys442 and Cys388–Cys415. Residues 388–415 are V4; it reads CNTSQLFNSTWNDTTRANSTEVTITLPC. Asn389, Asn395, Asn399, Asn405, and Asn458 each carry an N-linked (GlcNAc...) asparagine; by host glycan. 2 V5 regions span residues 458–469 and 460–469; these read NTTNGIEIFRPA and TNGIEIFRPA. The tract at residues 510-531 is fusion peptide; that stretch reads AVGMLGAMFLGFLGAAGSTMGA. Positions 573 to 591 are immunosuppression; the sequence is KQLQARVLAVERYLKDQQL. Cys597 and Cys603 are joined by a disulfide. Residues Asn610, Asn615, Asn624, and Asn636 are each glycosylated (N-linked (GlcNAc...) asparagine; by host). Residues 632-666 are a coiled coil; the sequence is REIDNYTHLIYTLIEESQNQQEKNEQELLELDKWA. The tract at residues 661 to 682 is MPER; binding to GalCer; it reads ELDKWAGLWSWFSITNWLWYIR. Residues 684 to 704 traverse the membrane as a helical segment; it reads FIIIVGGLVGLRIVFAVLSIV. At 705 to 855 the chain is on the cytoplasmic side; it reads NRVRQGYSPL…IRQGLERALL (151 aa). The YXXL motif; contains endocytosis signal motif lies at 711–714; that stretch reads YSPL. Residues 718–742 are disordered; that stretch reads TRLPTQRGPDRPEGIEEEGGERDRD. Cys763 carries the S-palmitoyl cysteine; by host lipid modification. A Di-leucine internalization motif motif is present at residues 854-855; sequence LL.

It belongs to the HIV-1 env protein family. As to quaternary structure, the mature envelope protein (Env) consists of a homotrimer of non-covalently associated gp120-gp41 heterodimers. The resulting complex protrudes from the virus surface as a spike. There seems to be as few as 10 spikes on the average virion. Interacts with host CD4, CCR5 and CXCR4. Gp120 also interacts with the C-type lectins CD209/DC-SIGN and CLEC4M/DC-SIGNR (collectively referred to as DC-SIGN(R)). Gp120 and gp41 interact with GalCer. Gp120 interacts with host ITGA4/ITGB7 complex; on CD4+ T-cells, this interaction results in rapid activation of integrin ITGAL/LFA-1, which facilitates efficient cell-to-cell spreading of HIV-1. Gp120 interacts with cell-associated heparan sulfate; this interaction increases virus infectivity on permissive cells and may be involved in infection of CD4- cells. In terms of assembly, the mature envelope protein (Env) consists of a homotrimer of non-covalently associated gp120-gp41 heterodimers. The resulting complex protrudes from the virus surface as a spike. There seems to be as few as 10 spikes on the average virion. Post-translationally, highly glycosylated by host. The high number of glycan on the protein is reffered to as 'glycan shield' because it contributes to hide protein sequence from adaptive immune system. In terms of processing, palmitoylation of the transmembrane protein and of Env polyprotein (prior to its proteolytic cleavage) is essential for their association with host cell membrane lipid rafts. Palmitoylation is therefore required for envelope trafficking to classical lipid rafts, but not for viral replication. Specific enzymatic cleavages in vivo yield mature proteins. Envelope glycoproteins are synthesized as an inactive precursor that is heavily N-glycosylated and processed likely by host cell furin in the Golgi to yield the mature SU and TM proteins. The cleavage site between SU and TM requires the minimal sequence [KR]-X-[KR]-R. About 2 of the 9 disulfide bonds of gp41 are reduced by P4HB/PDI, following binding to CD4 receptor.

It is found in the virion membrane. The protein localises to the host cell membrane. It localises to the host endosome membrane. Functionally, oligomerizes in the host endoplasmic reticulum into predominantly trimers. In a second time, gp160 transits in the host Golgi, where glycosylation is completed. The precursor is then proteolytically cleaved in the trans-Golgi and thereby activated by cellular furin or furin-like proteases to produce gp120 and gp41. Its function is as follows. Attaches the virus to the host lymphoid cell by binding to the primary receptor CD4. This interaction induces a structural rearrangement creating a high affinity binding site for a chemokine coreceptor like CXCR4 and/or CCR5. Acts as a ligand for CD209/DC-SIGN and CLEC4M/DC-SIGNR, which are respectively found on dendritic cells (DCs), and on endothelial cells of liver sinusoids and lymph node sinuses. These interactions allow capture of viral particles at mucosal surfaces by these cells and subsequent transmission to permissive cells. HIV subverts the migration properties of dendritic cells to gain access to CD4+ T-cells in lymph nodes. Virus transmission to permissive T-cells occurs either in trans (without DCs infection, through viral capture and transmission), or in cis (following DCs productive infection, through the usual CD4-gp120 interaction), thereby inducing a robust infection. In trans infection, bound virions remain infectious over days and it is proposed that they are not degraded, but protected in non-lysosomal acidic organelles within the DCs close to the cell membrane thus contributing to the viral infectious potential during DCs' migration from the periphery to the lymphoid tissues. On arrival at lymphoid tissues, intact virions recycle back to DCs' cell surface allowing virus transmission to CD4+ T-cells. In terms of biological role, acts as a class I viral fusion protein. Under the current model, the protein has at least 3 conformational states: pre-fusion native state, pre-hairpin intermediate state, and post-fusion hairpin state. During fusion of viral and target intracellular membranes, the coiled coil regions (heptad repeats) assume a trimer-of-hairpins structure, positioning the fusion peptide in close proximity to the C-terminal region of the ectodomain. The formation of this structure appears to drive apposition and subsequent fusion of viral and target cell membranes. Complete fusion occurs in host cell endosomes and is dynamin-dependent, however some lipid transfer might occur at the plasma membrane. The virus undergoes clathrin-dependent internalization long before endosomal fusion, thus minimizing the surface exposure of conserved viral epitopes during fusion and reducing the efficacy of inhibitors targeting these epitopes. Membranes fusion leads to delivery of the nucleocapsid into the cytoplasm. This chain is Envelope glycoprotein gp160, found in Homo sapiens (Human).